The chain runs to 254 residues: Inner membrane protein YabI (254 aa).

Residues 1–7 are Periplasmic-facing; that stretch reads MQALLEH. 2 helical membrane-spanning segments follow: residues 8–28 and 29–49; these read FITQ…FLES and LALV…GALI. Residues 50-58 are Periplasmic-facing; that stretch reads GSGELSFWH. The chain crosses the membrane as a helical span at residues 59-79; that stretch reads AWLAGIIGCLMGDWISFWLGW. Over 80–144 the chain is Cytoplasmic; sequence RFKKPLHRWS…LPVAKFITPN (65 aa). A helical membrane pass occupies residues 145–165; sequence IIGCLLWPPFYFLPGILAGAA. Over 166–178 the chain is Periplasmic; sequence IDIPAGMQSGEFK. A helical membrane pass occupies residues 179–199; the sequence is WLLLATAVFLWVGGWLCWRLW. Over 200–215 the chain is Cytoplasmic; it reads RSGKATDRLSHYLSRG. Residues 216-236 form a helical membrane-spanning segment; that stretch reads RLLWLTPLISAIGVVALVVLI. Residues 237 to 254 are Periplasmic-facing; sequence RHPLMPVYIDILRKVVGV.

This sequence belongs to the DedA family.

Its subcellular location is the cell inner membrane. This Escherichia coli (strain K12) protein is Inner membrane protein YabI (yabI).